Here is a 290-residue protein sequence, read N- to C-terminus: 4-hydroxybenzoate octaprenyltransferase (290 aa).

8 helical membrane-spanning segments follow: residues 33–53 (LAALWVAADGFPGWHLLAVFV), 91–111 (LGVREAALVGVVLTLVAFVLV), 116–136 (WEAVAWSVPAVLFTILYPFTK), 138–158 (FFAMPQAFLGIAFNFGIVIAF), 165–185 (VPATAWVLWLANLFLVLAYDT), 212–232 (VAAIMGFFVLCLGLTAWVLAP), 237–257 (WPLWLGLGVAAAQVAWHFTLI), and 269–289 (FSKSHWIGAAIFAGVALGYLL).

Belongs to the UbiA prenyltransferase family. Requires Mg(2+) as cofactor.

The protein resides in the cell inner membrane. The enzyme catalyses all-trans-octaprenyl diphosphate + 4-hydroxybenzoate = 4-hydroxy-3-(all-trans-octaprenyl)benzoate + diphosphate. The protein operates within cofactor biosynthesis; ubiquinone biosynthesis. Catalyzes the prenylation of para-hydroxybenzoate (PHB) with an all-trans polyprenyl group. Mediates the second step in the final reaction sequence of ubiquinone-8 (UQ-8) biosynthesis, which is the condensation of the polyisoprenoid side chain with PHB, generating the first membrane-bound Q intermediate 3-octaprenyl-4-hydroxybenzoate. This Acidovorax ebreus (strain TPSY) (Diaphorobacter sp. (strain TPSY)) protein is 4-hydroxybenzoate octaprenyltransferase.